The chain runs to 312 residues: Ribose-phosphate pyrophosphokinase (312 aa).

Residues 34-36 (DGE) and 93-94 (RQ) each bind ATP. His-128 and Asp-167 together coordinate Mg(2+). Residue Lys-191 is part of the active site. Residues Arg-193 and Asp-217 each contribute to the D-ribose 5-phosphate site.

Belongs to the ribose-phosphate pyrophosphokinase family. Class I subfamily. Homohexamer. The cofactor is Mg(2+).

It localises to the cytoplasm. It catalyses the reaction D-ribose 5-phosphate + ATP = 5-phospho-alpha-D-ribose 1-diphosphate + AMP + H(+). Its pathway is metabolic intermediate biosynthesis; 5-phospho-alpha-D-ribose 1-diphosphate biosynthesis; 5-phospho-alpha-D-ribose 1-diphosphate from D-ribose 5-phosphate (route I): step 1/1. Its function is as follows. Involved in the biosynthesis of the central metabolite phospho-alpha-D-ribosyl-1-pyrophosphate (PRPP) via the transfer of pyrophosphoryl group from ATP to 1-hydroxyl of ribose-5-phosphate (Rib-5-P). The sequence is that of Ribose-phosphate pyrophosphokinase from Baumannia cicadellinicola subsp. Homalodisca coagulata.